Consider the following 243-residue polypeptide: ADP-ribosylation factor-like protein 10 (243 aa).

Residues 83 to 90 (GLDGSGKS), 127 to 131 (EIGGS), and 184 to 187 (NKQD) each bind GTP.

Belongs to the small GTPase superfamily. Arf family.

This chain is ADP-ribosylation factor-like protein 10 (Arl10), found in Mus musculus (Mouse).